The chain runs to 431 residues: Adenylosuccinate lyase (431 aa).

N(6)-(1,2-dicarboxyethyl)-AMP is bound by residues 4–5 (RY), 67–69 (RHD), and 93–94 (TS). The active-site Proton donor/acceptor is the H141. Q212 is a N(6)-(1,2-dicarboxyethyl)-AMP binding site. The Proton donor/acceptor role is filled by S262. N(6)-(1,2-dicarboxyethyl)-AMP-binding positions include S263, 268–270 (KRN), N276, and 307–311 (SAERI).

This sequence belongs to the lyase 1 family. Adenylosuccinate lyase subfamily. In terms of assembly, homodimer and homotetramer. Residues from neighboring subunits contribute catalytic and substrate-binding residues to each active site.

It carries out the reaction N(6)-(1,2-dicarboxyethyl)-AMP = fumarate + AMP. The catalysed reaction is (2S)-2-[5-amino-1-(5-phospho-beta-D-ribosyl)imidazole-4-carboxamido]succinate = 5-amino-1-(5-phospho-beta-D-ribosyl)imidazole-4-carboxamide + fumarate. It participates in purine metabolism; AMP biosynthesis via de novo pathway; AMP from IMP: step 2/2. Its pathway is purine metabolism; IMP biosynthesis via de novo pathway; 5-amino-1-(5-phospho-D-ribosyl)imidazole-4-carboxamide from 5-amino-1-(5-phospho-D-ribosyl)imidazole-4-carboxylate: step 2/2. Its function is as follows. Catalyzes two reactions in de novo purine nucleotide biosynthesis. Catalyzes the breakdown of 5-aminoimidazole- (N-succinylocarboxamide) ribotide (SAICAR or 2-[5-amino-1-(5-phospho-beta-D-ribosyl)imidazole-4-carboxamido]succinate) to 5-aminoimidazole-4-carboxamide ribotide (AICAR or 5-amino-1-(5-phospho-beta-D-ribosyl)imidazole-4-carboxamide) and fumarate, and of adenylosuccinate (ADS or N(6)-(1,2-dicarboxyethyl)-AMP) to adenosine monophosphate (AMP) and fumarate. This chain is Adenylosuccinate lyase (purB), found in Staphylococcus epidermidis (strain ATCC 35984 / DSM 28319 / BCRC 17069 / CCUG 31568 / BM 3577 / RP62A).